The sequence spans 379 residues: Chaperone protein DnaJ 2 (379 aa).

A J domain is found at 4-68; sequence DYYAVLGVRR…QKKQVYDLGG (65 aa). The CR-type zinc finger occupies 130 to 212; sequence GTTKDIQVDT…CAGDGRVPSR (83 aa). Cys143, Cys146, Cys160, Cys163, Cys186, Cys189, Cys200, and Cys203 together coordinate Zn(2+). CXXCXGXG motif repeat units follow at residues 143–150, 160–167, 186–193, and 200–207; these read CNTCNGEG, CDMCRGRG, CPQCQGFA, and CPECAGDG. Positions 351–379 are disordered; that stretch reads RGEERPTGQFQPGQQGLFSRLKDAFNGRS. Residues 358-367 are compositionally biased toward polar residues; the sequence is GQFQPGQQGL. Residues 370–379 show a composition bias toward basic and acidic residues; the sequence is RLKDAFNGRS.

The protein belongs to the DnaJ family. In terms of assembly, homodimer. The cofactor is Zn(2+).

The protein resides in the cytoplasm. In terms of biological role, participates actively in the response to hyperosmotic and heat shock by preventing the aggregation of stress-denatured proteins and by disaggregating proteins, also in an autonomous, DnaK-independent fashion. Unfolded proteins bind initially to DnaJ; upon interaction with the DnaJ-bound protein, DnaK hydrolyzes its bound ATP, resulting in the formation of a stable complex. GrpE releases ADP from DnaK; ATP binding to DnaK triggers the release of the substrate protein, thus completing the reaction cycle. Several rounds of ATP-dependent interactions between DnaJ, DnaK and GrpE are required for fully efficient folding. Also involved, together with DnaK and GrpE, in the DNA replication of plasmids through activation of initiation proteins. This is Chaperone protein DnaJ 2 from Streptomyces albus G.